A 105-amino-acid polypeptide reads, in one-letter code: Large ribosomal subunit protein uL24 (105 aa).

The disordered stretch occupies residues 40–61; that stretch reads RIKKHTPQSANERGASSGGIVT.

This sequence belongs to the universal ribosomal protein uL24 family. Part of the 50S ribosomal subunit.

In terms of biological role, one of two assembly initiator proteins, it binds directly to the 5'-end of the 23S rRNA, where it nucleates assembly of the 50S subunit. Functionally, one of the proteins that surrounds the polypeptide exit tunnel on the outside of the subunit. This Mycobacteroides abscessus (strain ATCC 19977 / DSM 44196 / CCUG 20993 / CIP 104536 / JCM 13569 / NCTC 13031 / TMC 1543 / L948) (Mycobacterium abscessus) protein is Large ribosomal subunit protein uL24.